Reading from the N-terminus, the 92-residue chain is uncharacterized protein (92 aa).

This is an uncharacterized protein from Escherichia coli (strain K12).